Here is a 290-residue protein sequence, read N- to C-terminus: 3-keto-disaccharide hydrolase (290 aa).

The N-terminal stretch at 1-19 (MKKVFYPLACCLAAGVLVS) is a signal peptide. Residue Cys-20 is the site of N-palmitoyl cysteine attachment. Residue Cys-20 is the site of S-diacylglycerol cysteine attachment.

The protein localises to the cell membrane. The catalysed reaction is 3-dehydro-alpha,alpha-trehalose + H2O = 3-dehydro-D-glucose + D-glucose. Functionally, 3-keto-disaccharide hydrolase that preferentially hydrolyzes 3-keto-trehalose (3-dehydro-alpha,alpha-trehalose). Important for disaccharide utilization in the human gut. Also shows hydrolysis activity with the glucosinolates glucoraphanin or glucobrassicin, but with much lower efficiency. The chain is 3-keto-disaccharide hydrolase from Bacteroides thetaiotaomicron (strain ATCC 29148 / DSM 2079 / JCM 5827 / CCUG 10774 / NCTC 10582 / VPI-5482 / E50).